The sequence spans 465 residues: Alpha-2A adrenergic receptor (465 aa).

Topologically, residues Met-1–Thr-48 are extracellular. N-linked (GlcNAc...) asparagine glycans are attached at residues Asn-25 and Asn-29. The chain crosses the membrane as a helical span at residues Leu-49–Phe-74. Residues Thr-75–Leu-85 are Cytoplasmic-facing. A helical transmembrane segment spans residues Phe-86–Met-111. The Extracellular portion of the chain corresponds to Gly-112–Cys-121. Residues Cys-121 and Cys-203 are joined by a disulfide bond. Residues Glu-122–Leu-144 form a helical membrane-spanning segment. Residues Asp-145–Arg-164 lie on the Cytoplasmic side of the membrane. A helical membrane pass occupies residues Ile-165–Glu-188. The Extracellular segment spans residues Lys-189–Asp-207. The helical transmembrane segment at Gln-208–Val-232 threads the bilayer. The Cytoplasmic portion of the chain corresponds to Arg-233 to Phe-389. Residues Thr-242–Trp-377 are disordered. Positions Ser-313–Pro-330 are enriched in basic and acidic residues. Residue Ser-346 is modified to Phosphoserine. The span at Gly-353 to Gln-364 shows a compositional bias: gly residues. Residue Arg-368 is modified to Omega-N-methylarginine. The chain crosses the membrane as a helical span at residues Val-390–Val-414. The Extracellular portion of the chain corresponds to Gly-415–Asn-424. A helical transmembrane segment spans residues Phe-425–Asn-445. Residues His-446–Val-465 lie on the Cytoplasmic side of the membrane. Cys-457 carries S-palmitoyl cysteine lipidation.

It belongs to the G-protein coupled receptor 1 family. Adrenergic receptor subfamily. ADRA2A sub-subfamily. In terms of tissue distribution, expressed in brain.

It is found in the cell membrane. Alpha-2 adrenergic receptors mediate the catecholamine-induced inhibition of adenylate cyclase through the action of G proteins. This chain is Alpha-2A adrenergic receptor, found in Rattus norvegicus (Rat).